A 536-amino-acid polypeptide reads, in one-letter code: Phosphoenolpyruvate carboxykinase (ATP) (536 aa).

3 residues coordinate substrate: Arg61, Tyr195, and Lys201. Residues Lys201, His220, and 236-244 (GLSGTGKTT) contribute to the ATP site. The Mn(2+) site is built by Lys201 and His220. Asp257 provides a ligand contact to Mn(2+). ATP contacts are provided by Glu285, Arg322, and Thr447. A substrate-binding site is contributed by Arg322.

The protein belongs to the phosphoenolpyruvate carboxykinase (ATP) family. Mn(2+) serves as cofactor.

It is found in the cytoplasm. It carries out the reaction oxaloacetate + ATP = phosphoenolpyruvate + ADP + CO2. It participates in carbohydrate biosynthesis; gluconeogenesis. In terms of biological role, involved in the gluconeogenesis. Catalyzes the conversion of oxaloacetate (OAA) to phosphoenolpyruvate (PEP) through direct phosphoryl transfer between the nucleoside triphosphate and OAA. This Brucella anthropi (strain ATCC 49188 / DSM 6882 / CCUG 24695 / JCM 21032 / LMG 3331 / NBRC 15819 / NCTC 12168 / Alc 37) (Ochrobactrum anthropi) protein is Phosphoenolpyruvate carboxykinase (ATP).